Consider the following 394-residue polypeptide: HORMA domain-containing protein 1 (394 aa).

An HORMA domain is found at 24-226 (HQSLVLVKRL…TPFHIFKVKV (203 aa)). The interval 252–394 (KILRDKDVED…RKFSEPKEHI (143 aa)) is disordered. Basic and acidic residues predominate over residues 253 to 282 (ILRDKDVEDEQEHYTSDDLDMETKMEEQEK). Polar residues-rich tracts occupy residues 310–324 (LSIS…VNKT) and 343–352 (KMANGNQPVK). The span at 362–374 (QHESGRRVLHHFD) shows a compositional bias: basic and acidic residues. A Phosphoserine modification is found at Ser376. Positions 383–386 (KRRK) match the Nuclear localization signal motif.

Interacts with HORMAD2. Interacts with IHO1. In terms of processing, phosphorylated at Ser-377 in a SPO11-dependent manner.

It is found in the nucleus. The protein localises to the chromosome. Plays a key role in meiotic progression. Regulates 3 different functions during meiosis: ensures that sufficient numbers of processed DNA double-strand breaks (DSBs) are available for successful homology search by increasing the steady-state numbers of single-stranded DSB ends. Promotes synaptonemal-complex formation independently of its role in homology search. Plays a key role in the male mid-pachytene checkpoint and the female meiotic prophase checkpoint: required for efficient build-up of ATR activity on unsynapsed chromosome regions, a process believed to form the basis of meiotic silencing of unsynapsed chromatin (MSUC) and meiotic prophase quality control in both sexes. This Macaca fascicularis (Crab-eating macaque) protein is HORMA domain-containing protein 1 (HORMAD1).